Reading from the N-terminus, the 152-residue chain is 3-dehydroquinate dehydratase (152 aa).

The active-site Proton acceptor is tyrosine 26. Substrate contacts are provided by asparagine 77, histidine 83, and aspartate 90. The active-site Proton donor is histidine 103. Residues 104-105 (LS) and arginine 114 contribute to the substrate site.

The protein belongs to the type-II 3-dehydroquinase family. In terms of assembly, homododecamer.

It carries out the reaction 3-dehydroquinate = 3-dehydroshikimate + H2O. The protein operates within metabolic intermediate biosynthesis; chorismate biosynthesis; chorismate from D-erythrose 4-phosphate and phosphoenolpyruvate: step 3/7. Functionally, catalyzes a trans-dehydration via an enolate intermediate. The chain is 3-dehydroquinate dehydratase from Tolumonas auensis (strain DSM 9187 / NBRC 110442 / TA 4).